The following is a 551-amino-acid chain: Pentatricopeptide repeat-containing protein At3g13150 (551 aa).

The segment at 22 to 67 (ATAKSAKPRSQTKSTKFPSKLKASTASVGDGGQSSNDAKDSKNSKL) is disordered. The segment covering 29-48 (PRSQTKSTKFPSKLKASTAS) has biased composition (polar residues). Over residues 58-67 (DAKDSKNSKL) the composition is skewed to basic and acidic residues. PPR repeat units lie at residues 121–155 (SEDF…NCER), 156–191 (TVKS…GITP), 192–226 (DLVT…GFEP), 227–261 (DLIS…NLSP), 262–296 (NIRS…GISP), 297–331 (DVHT…GLTP), and 332–366 (DTVT…KLLS). 2 disordered regions span residues 409 to 435 (GKKK…SPDT) and 449 to 551 (SSSD…LLDD). A compositionally biased stretch (low complexity) spans 415 to 435 (SSPVSSSAKTTSTPVSSSPDT).

It belongs to the PPR family. P subfamily.

The protein is Pentatricopeptide repeat-containing protein At3g13150 of Arabidopsis thaliana (Mouse-ear cress).